The chain runs to 270 residues: Phosphatidylglycerol--prolipoprotein diacylglyceryl transferase (270 aa).

Helical transmembrane passes span 10–30 (VAVA…LVGI), 56–76 (LIFW…VLFY), 92–112 (WKGG…AWWF), 120–140 (FFQL…AGRI), 175–195 (SQLY…NLYA), 202–222 (MAVS…VEFV), and 237–257 (VTMG…LIWL). Arg139 provides a ligand contact to a 1,2-diacyl-sn-glycero-3-phospho-(1'-sn-glycerol).

It belongs to the Lgt family.

Its subcellular location is the cell inner membrane. The enzyme catalyses L-cysteinyl-[prolipoprotein] + a 1,2-diacyl-sn-glycero-3-phospho-(1'-sn-glycerol) = an S-1,2-diacyl-sn-glyceryl-L-cysteinyl-[prolipoprotein] + sn-glycerol 1-phosphate + H(+). It participates in protein modification; lipoprotein biosynthesis (diacylglyceryl transfer). Functionally, catalyzes the transfer of the diacylglyceryl group from phosphatidylglycerol to the sulfhydryl group of the N-terminal cysteine of a prolipoprotein, the first step in the formation of mature lipoproteins. This is Phosphatidylglycerol--prolipoprotein diacylglyceryl transferase from Pseudomonas syringae pv. syringae (strain B728a).